Reading from the N-terminus, the 699-residue chain is Macoilin-2 (699 aa).

The next 4 membrane-spanning stretches (helical) occupy residues 28 to 48 (TFLYLKFLVVWALVLLADFVL), 75 to 95 (AFSVFFVCVAFTSDIICLLFI), 120 to 140 (VCLPTVSLWILFVYIEAAIRF), and 154 to 174 (FAAHCIGYPVVTLGFGFKSYV). Disordered stretches follow at residues 219–289 (AAAA…SILP), 322–411 (LLKD…PNNQ), 432–451 (LQASRQTEQDLRSQLGSLGT), and 679–699 (FMDTSPSGLDPNASVYQPLKK). Residues Asn-241, Asn-267, Asn-345, and Asn-365 are each glycosylated (N-linked (GlcNAc...) asparagine). The span at 257–271 (LEYREKERGKNESKK) shows a compositional bias: basic and acidic residues. Residues 329–346 (SSSSSSTSSNSNKNYKNA) are compositionally biased toward low complexity. Low complexity predominate over residues 366–382 (GSVPSSSGPSSSASSSS). Asn-690 is a glycosylation site (N-linked (GlcNAc...) asparagine).

Belongs to the macoilin family.

The protein resides in the nucleus membrane. Its subcellular location is the cell projection. The protein localises to the axon. It is found in the rough endoplasmic reticulum membrane. In terms of biological role, may play a role in the regulation of neuronal activity. This chain is Macoilin-2, found in Danio rerio (Zebrafish).